Here is a 132-residue protein sequence, read N- to C-terminus: Small ribosomal subunit protein uS8c (132 aa).

Belongs to the universal ribosomal protein uS8 family. Part of the 30S ribosomal subunit.

It is found in the plastid. It localises to the chloroplast. Functionally, one of the primary rRNA binding proteins, it binds directly to 16S rRNA central domain where it helps coordinate assembly of the platform of the 30S subunit. The polypeptide is Small ribosomal subunit protein uS8c (rps8) (Angiopteris evecta (Mule's foot fern)).